Reading from the N-terminus, the 76-residue chain is Large ribosomal subunit protein bL31 (76 aa).

Belongs to the bacterial ribosomal protein bL31 family. Type A subfamily. As to quaternary structure, part of the 50S ribosomal subunit.

Its function is as follows. Binds the 23S rRNA. This chain is Large ribosomal subunit protein bL31 (rpmE), found in Pelagibacter ubique (strain HTCC1062).